The chain runs to 185 residues: MINEIKKDAQERMEKSVEALKNNLLKIRTGRAHPSLLSGLSVEYYGARTPINQVANIIAEDSRTLAITVFDKELAGLVEKAIMMSDLGLNPMSAGTVIRVPLPPLTEERRKSLVKIVRGEAENGRVAVRNIRRDANGDIKALLKDKEISEDDDRRTQDEIQKLTDIAVKNIDDVLAVKEKELMEV.

This sequence belongs to the RRF family.

Its subcellular location is the cytoplasm. Functionally, responsible for the release of ribosomes from messenger RNA at the termination of protein biosynthesis. May increase the efficiency of translation by recycling ribosomes from one round of translation to another. The sequence is that of Ribosome-recycling factor from Aliivibrio salmonicida (strain LFI1238) (Vibrio salmonicida (strain LFI1238)).